Consider the following 247-residue polypeptide: Potassium channel Ftrac_2467 (247 aa).

6 helical membrane passes run threonine 23–serine 44, serine 56–tyrosine 78, lysine 89–serine 117, leucine 142–tryptophan 165, serine 187–tryptophan 210, and threonine 215–threonine 237. The short motif at arginine 24–aspartate 30 is the RxxxFSD motif element.

It belongs to the TMEM175 family. As to quaternary structure, homotetramer.

The protein localises to the cell membrane. It carries out the reaction K(+)(in) = K(+)(out). In terms of biological role, potassium channel; forms a potassium-permeable leak-like channel with weak selectivity for potassium. The channel is permeable for K(+), Rb(+) and Cs(+). In Marivirga tractuosa (strain ATCC 23168 / DSM 4126 / NBRC 15989 / NCIMB 1408 / VKM B-1430 / H-43) (Microscilla tractuosa), this protein is Potassium channel Ftrac_2467.